The following is a 162-amino-acid chain: Crossover junction endodeoxyribonuclease RuvC (162 aa).

Catalysis depends on residues Asp-7, Glu-67, and Asp-140. 3 residues coordinate Mg(2+): Asp-7, Glu-67, and Asp-140.

This sequence belongs to the RuvC family. Homodimer which binds Holliday junction (HJ) DNA. The HJ becomes 2-fold symmetrical on binding to RuvC with unstacked arms; it has a different conformation from HJ DNA in complex with RuvA. In the full resolvosome a probable DNA-RuvA(4)-RuvB(12)-RuvC(2) complex forms which resolves the HJ. The cofactor is Mg(2+).

It localises to the cytoplasm. The enzyme catalyses Endonucleolytic cleavage at a junction such as a reciprocal single-stranded crossover between two homologous DNA duplexes (Holliday junction).. The RuvA-RuvB-RuvC complex processes Holliday junction (HJ) DNA during genetic recombination and DNA repair. Endonuclease that resolves HJ intermediates. Cleaves cruciform DNA by making single-stranded nicks across the HJ at symmetrical positions within the homologous arms, yielding a 5'-phosphate and a 3'-hydroxyl group; requires a central core of homology in the junction. The consensus cleavage sequence is 5'-(A/T)TT(C/G)-3'. Cleavage occurs on the 3'-side of the TT dinucleotide at the point of strand exchange. HJ branch migration catalyzed by RuvA-RuvB allows RuvC to scan DNA until it finds its consensus sequence, where it cleaves and resolves the cruciform DNA. This chain is Crossover junction endodeoxyribonuclease RuvC, found in Wolinella succinogenes (strain ATCC 29543 / DSM 1740 / CCUG 13145 / JCM 31913 / LMG 7466 / NCTC 11488 / FDC 602W) (Vibrio succinogenes).